We begin with the raw amino-acid sequence, 992 residues long: MATIMIGSMAISVPNTHVSRASNSVMPVQAVQMAKQVPSARGVLYTLKREGSTQVIKHEEALRKFQEAFDQDVGIQRRLLVNKHSSIQSTKEGWFDLASLNFRAGSSKEAAIARRKQEEEDFLNGKYEQQFYAGVSATKSMKFEGGSVGFRTKYWRPTPKKTKERRATSQCRKPTYVLEEVLSIASKSGKLVEFITGKGKRVKVCYVRKHGAILPKFSLPHEEGKYIHQELQYASTYEFLPYICMFAKYKSINADDITYGDSGLLFDERSSLTTNHTKLPYFVVRGRRNGKLVNALEVVENMEDIQHYSQNPEAQFFRGWKKVFDKMPPHVENHECTIDFTNEQCGELAAAISQSIFPVKKLSCKQCRQHIKHLSWEEYKQFLLAHMGCHGAEWETFQEIDGMRYVKRVIETSTAENASLQTSLEIVRLTQNYKSTHMLQIQDINKALMKGPSVTQSELEQASKQLLAMTQWWKNHMALTDEDALKVFRNKRSSKALLNPSLLCDNQLDKNGNFVWGERGRHSKRFFANYFEEVVPSEGYSKYVIRTNPNGQRELAIGSLIVPLDFERARMALQGKSVTREPITMSCISRQDGNFVYPCCCVTHDDGKAFYSELKSPTKRHLVIGTSGDPKYIDLPATDADRMYIAKEGFCYLNIFLAMLVNVNEDEAKDFTKMVRDVIVPRLGKWPTMLDVATAAYMLTVFHPETRNAELPRILVDHACQTMHVIDSFGSLTVGYHVLKAGTVNQLIQFASNDLQSEMKFYRVGGEVQQRMKCETALITSIFKPKRMIQILENDPYILLMGLVSPSILIHMYRMKHFEKGVELWISKEHSVAKIFIILGQLTKRVAANDVLLEQLEMISETSERFMSILEDCPQAPHSYKTAKDLLTMYIEGKASNNQLVENGFVDMNDKLYMAYEKNLLRSLEAGMARIKLVGKIFYNMAIEKICSTYGEMFDKESCRRKQRIFRKLCECVLHECPVTPKKCKKYTFPKM.

One can recognise a Peptidase S30 domain in the interval 168 to 308 (TSQCRKPTYV…VENMEDIQHY (141 aa)). Catalysis depends on for P1 proteinase activity residues His221, Glu230, and Ser262. Positions 361–364 (KLSC) match the Involved in interaction with stylet and aphid transmission motif. An Involved in virions binding and aphid transmission motif is present at residues 617-619 (PTK). The Peptidase C6 domain occupies 643–765 (MYIAKEGFCY…QSEMKFYRVG (123 aa)). Residues Cys651 and His724 each act as for helper component proteinase activity in the active site.

Belongs to the potyviridae P3N-PIPO polyprotein family. Interacts (via PIPO domain) with host PCaP1 protein; this interaction may help to anchor the movement complex to the plasma membrane from which the complex could move to the plasmodesmata. Potyviral RNA is expressed as two polyproteins which undergo post-translational proteolytic processing. Genome polyprotein is processed by NIa-pro, P1 and HC-pro proteinases resulting in the production of at least ten individual proteins. P3N-PIPO is cleaved by P1 and HC-pro proteinases resulting in the production of three individual proteins. The P1 proteinase and the HC-pro cleave only their respective C-termini autocatalytically.

It localises to the host cell junction. Its subcellular location is the host plasmodesma. The enzyme catalyses Hydrolyzes a Gly-|-Gly bond at its own C-terminus, commonly in the sequence -Tyr-Xaa-Val-Gly-|-Gly, in the processing of the potyviral polyprotein.. Functionally, required for aphid transmission and also has proteolytic activity. Only cleaves a Gly-Gly dipeptide at its own C-terminus. Interacts with virions and aphid stylets. Acts as a suppressor of RNA-mediated gene silencing, also known as post-transcriptional gene silencing (PTGS), a mechanism of plant viral defense that limits the accumulation of viral RNAs. May have RNA-binding activity. Allows efficient cell to cell propagation, by bypassing the host cell wall barrier. Transports viral genome to neighboring plant cells directly through plasmosdesmata, without any budding. The polypeptide is P3N-PIPO polyprotein (Soybean mosaic virus (strain G2) (SMV)).